Reading from the N-terminus, the 244-residue chain is MSQLDLNALNELPKVDRVLALAETNAQLETLTAEERVAWALENLPGEYVLSSSFGIQAAVSLHLVNQIRPDIPVILTDTGYLFPEAYQFIDELTDKLKLNLKVYRAGESPAWQEARYGKLWEQGVEGIEKYNEINKVEPMNRALKELNAQTWFAGLRREQSGSRAHLPVLAIQRGVFKVLPIIDWDNRTVYQYLQKHGLKYHPLWDQGYLSVGDTHTTRKWEPGMAEEETRFFGLKRECGLHEG.

Cys-239 (nucleophile; cysteine thiosulfonate intermediate) is an active-site residue.

Belongs to the PAPS reductase family. CysH subfamily.

Its subcellular location is the cytoplasm. It catalyses the reaction [thioredoxin]-disulfide + sulfite + adenosine 3',5'-bisphosphate + 2 H(+) = [thioredoxin]-dithiol + 3'-phosphoadenylyl sulfate. It functions in the pathway sulfur metabolism; hydrogen sulfide biosynthesis; sulfite from sulfate: step 3/3. In terms of biological role, catalyzes the formation of sulfite from phosphoadenosine 5'-phosphosulfate (PAPS) using thioredoxin as an electron donor. This Salmonella paratyphi A (strain AKU_12601) protein is Phosphoadenosine 5'-phosphosulfate reductase.